The primary structure comprises 362 residues: 3-dehydroquinate synthase (362 aa).

Residues 71–76 (DGEQYK), 105–109 (GVVGD), 129–130 (TT), Lys-142, Lys-151, and 169–172 (CLKT) each bind NAD(+). Zn(2+) contacts are provided by Glu-184, His-247, and His-264.

The protein belongs to the sugar phosphate cyclases superfamily. Dehydroquinate synthase family. Requires Co(2+) as cofactor. Zn(2+) serves as cofactor. It depends on NAD(+) as a cofactor.

Its subcellular location is the cytoplasm. The catalysed reaction is 7-phospho-2-dehydro-3-deoxy-D-arabino-heptonate = 3-dehydroquinate + phosphate. Its pathway is metabolic intermediate biosynthesis; chorismate biosynthesis; chorismate from D-erythrose 4-phosphate and phosphoenolpyruvate: step 2/7. Functionally, catalyzes the conversion of 3-deoxy-D-arabino-heptulosonate 7-phosphate (DAHP) to dehydroquinate (DHQ). The protein is 3-dehydroquinate synthase of Shigella flexneri serotype 5b (strain 8401).